The primary structure comprises 577 residues: (E)-beta-farnesene synthase (577 aa).

Mg(2+) is bound by residues D327, D331, D474, S478, and E482. A DDXXD motif motif is present at residues 327-331 (DDTFD).

This sequence belongs to the terpene synthase family. It depends on Mg(2+) as a cofactor. The cofactor is Co(2+). Requires Mn(2+) as cofactor. As to expression, expressed in flowers.

The protein localises to the cytoplasm. The enzyme catalyses (2E,6E)-farnesyl diphosphate = (E)-beta-farnesene + diphosphate. Its pathway is secondary metabolite biosynthesis; terpenoid biosynthesis. With respect to regulation, strongly inhibited by manganese at concentration higher than 20 uM. In terms of biological role, sesquiterpene cyclase catalyzing the production of beta-farnesene from farnesyl diphosphate. Unable to use geranyl diphosphate as substrate. This Artemisia annua (Sweet wormwood) protein is (E)-beta-farnesene synthase (CASC125).